The sequence spans 74 residues: MATIFDILNTHNNNNNFENCKRQCSTNKSNKTIIDILPSMDVTMTNDKLIIETELAGISKDHIEIDIKDSILTI.

In terms of domain architecture, sHSP spans 31-74; sequence KTIIDILPSMDVTMTNDKLIIETELAGISKDHIEIDIKDSILTI.

The protein belongs to the small heat shock protein (HSP20) family.

This chain is Small heat shock protein hspG10 (hspG10), found in Dictyostelium discoideum (Social amoeba).